Reading from the N-terminus, the 471-residue chain is dTDP-4-dehydro-6-deoxy-alpha-D-glucopyranose 2,3-dehydratase (471 aa).

DTDP-4-dehydro-6-deoxy-alpha-D-glucose-binding positions include tryptophan 67, 155-159 (TRSNY), serine 193, asparagine 238, tryptophan 288, arginine 351, 367-369 (QCT), 372-373 (NY), and 405-408 (EGGR).

It belongs to the hexose 2,3-dehydratase family. In terms of assembly, homodimer.

The catalysed reaction is dTDP-4-dehydro-6-deoxy-alpha-D-glucose = dTDP-3,4-didehydro-2,6-dideoxy-alpha-D-glucose + H2O. It functions in the pathway antibiotic biosynthesis. Its function is as follows. Involved in the biosynthesis of the 2,3,6-trideoxysugar L-epivancosamine, the terminal sugar added to the aglycone scaffold of chloroeremomycin, a member of the glycopeptide antibiotics vancomycin family. Catalyzes the removal of the hydroxyl group at position C-2 of the hexose ring of dTDP-4-dehydro-6-deoxy-alpha-D-glucopyranose, and the oxidation of the hydroxyl group at position C-3 to form a carbonyl functionality. The product of the reaction, dTDP-2,6-dideoxy-D-glycero-hex-2-enos-4-ulose, is a highly unstable diketosugar, which spontaneously forms dTDP-3,4-didehydro-2,6-dideoxy-alpha-D-glucose. The sequence is that of dTDP-4-dehydro-6-deoxy-alpha-D-glucopyranose 2,3-dehydratase from Amycolatopsis orientalis (Nocardia orientalis).